Reading from the N-terminus, the 438-residue chain is chitinase-like effector (438 aa).

Positions 1–23 are cleaved as a signal peptide; the sequence is MFTPLSSVTALLALSSAFLGAQA. The GH18 domain maps to 54–437; it reads FIAKGYYTGW…DAIRSGAGLS (384 aa). Residue W416 coordinates chitin.

It belongs to the glycosyl hydrolase 18 family.

The protein resides in the secreted. Functionally, catalytically impaired chitinase that binds efficiently to chitin, but not to chitosan, xylan, or cellulose. Despite the lack of chitinolytic activity, retains substrate binding specificity and acts as an effector to prevent chitin-triggered immunity by sequestering immunogenic chitin fragments. Does not function in the protection of fungal cell wall against plant hydrolytic enzymes. The sequence is that of chitinase-like effector from Moniliophthora perniciosa (Witches'-broom disease fungus).